We begin with the raw amino-acid sequence, 181 residues long: ADP-ribosylation factor 1 (181 aa).

N-acetylglycine; alternate is present on glycine 2. Residue glycine 2 is the site of N-myristoyl glycine; alternate attachment. An important for the stable binding to the membranes region spans residues 3–16 (NIFANLFKGLFGKK). GTP contacts are provided by residues 24–32 (GLDAAGKTT), 126–129 (NKQD), and alanine 160.

It belongs to the small GTPase superfamily. Arf family. In terms of assembly, interacts (when activated) with GGA1, GGA2 and GGA3; the interaction is required for proper subcellular location of GGA1, GGA2 and GGA3. Interacts with ARHGAP21, ASAP2, GGA1, HERC1, PRKCABP, PIP5K1B, TMED2, PSCD2, TMED10 and GRIA2. Interacts with ARFGAP1, which hydrolyzes GTP and thus, regulates its function. Interacts with PI4KB in the Golgi complex. Interacts with NCS1/FREQ in the Golgi and at the plasma membrane. Interacts with PLEKHA3. Interacts with PLEKHA8; the interaction, together with phosphatidylinositol 4-phosphate binding, is required for FAPP2-mediated glucosylceramide transfer activity. Interacts (activated) with PICK1 (via PDZ domain); the interaction blocks Arp2/3 complex inhibition. Interacts with IQSEC1. Interacts with C9orf72.

The protein localises to the golgi apparatus membrane. The protein resides in the synapse. It is found in the synaptosome. It localises to the postsynaptic density. The catalysed reaction is GTP + H2O = GDP + phosphate + H(+). Its activity is regulated as follows. Alternates between an inactive GDP-bound form and an active GTP-bound form. Activated by guanine nucleotide-exchange factors (GEFs) and inactivated by GTPase-activating proteins (GAPs). Small GTPase involved in protein trafficking between different compartments. Modulates vesicle budding and uncoating within the Golgi complex. In its GTP-bound form, triggers the recruitment of coatomer proteins to the Golgi membrane. The hydrolysis of ARF1-bound GTP, which is mediated by ARFGAPs proteins, is required for dissociation of coat proteins from Golgi membranes and vesicles. The GTP-bound form interacts with PICK1 to limit PICK1-mediated inhibition of Arp2/3 complex activity; the function is linked to AMPA receptor (AMPAR) trafficking, regulation of synaptic plasticity of excitatory synapses and spine shrinkage during long-term depression (LTD). Plays a key role in the regulation of intestinal stem cells and gut microbiota, and is essential for maintaining intestinal homeostasis. Also plays a critical role in mast cell expansion but not in mast cell maturation by facilitating optimal mTORC1 activation. This chain is ADP-ribosylation factor 1 (ARF1), found in Bos taurus (Bovine).